We begin with the raw amino-acid sequence, 123 residues long: Small ribosomal subunit protein uS12 (123 aa).

Asp-89 is modified (3-methylthioaspartic acid).

This sequence belongs to the universal ribosomal protein uS12 family. As to quaternary structure, part of the 30S ribosomal subunit. Contacts proteins S8 and S17. May interact with IF1 in the 30S initiation complex.

Its function is as follows. With S4 and S5 plays an important role in translational accuracy. Interacts with and stabilizes bases of the 16S rRNA that are involved in tRNA selection in the A site and with the mRNA backbone. Located at the interface of the 30S and 50S subunits, it traverses the body of the 30S subunit contacting proteins on the other side and probably holding the rRNA structure together. The combined cluster of proteins S8, S12 and S17 appears to hold together the shoulder and platform of the 30S subunit. The chain is Small ribosomal subunit protein uS12 from Orientia tsutsugamushi (strain Boryong) (Rickettsia tsutsugamushi).